Consider the following 172-residue polypeptide: Small ribosomal subunit protein uS5 (172 aa).

The S5 DRBM domain occupies 16-79 (LKDRLVAINR…EAAKKNLIRV (64 aa)).

The protein belongs to the universal ribosomal protein uS5 family. As to quaternary structure, part of the 30S ribosomal subunit. Contacts proteins S4 and S8.

Its function is as follows. With S4 and S12 plays an important role in translational accuracy. Functionally, located at the back of the 30S subunit body where it stabilizes the conformation of the head with respect to the body. The protein is Small ribosomal subunit protein uS5 of Porphyromonas gingivalis (strain ATCC BAA-308 / W83).